We begin with the raw amino-acid sequence, 523 residues long: UDP-glucuronosyltransferase 3A1 (523 aa).

An N-terminal signal peptide occupies residues 1–22 (MVGQRVLLLVAFLLSGVLLSEA). Over 23 to 483 (AKILTISTLG…YAFQQPWHEQ (461 aa)) the chain is Extracellular. Residue N52 is glycosylated (N-linked (GlcNAc...) asparagine). A helical membrane pass occupies residues 484–504 (YLIDVFVFLLGLTLGTMWLCG). At 505–523 (KLLGVVARWLRGARKVKKT) the chain is on the cytoplasmic side.

The protein belongs to the UDP-glycosyltransferase family.

The protein resides in the membrane. It carries out the reaction glucuronate acceptor + UDP-alpha-D-glucuronate = acceptor beta-D-glucuronoside + UDP + H(+). UDP-glucuronosyltransferases catalyze phase II biotransformation reactions in which lipophilic substrates are conjugated with glucuronic acid to increase water solubility and enhance excretion. They are of major importance in the conjugation and subsequent elimination of potentially toxic xenobiotics and endogenous compounds. The sequence is that of UDP-glucuronosyltransferase 3A1 (UGT3A1) from Homo sapiens (Human).